Here is a 145-residue protein sequence, read N- to C-terminus: uncharacterized protein (145 aa).

The segment at 86–110 (CERCGEEIPEPRLCAIPWTRYCAKC) adopts a dksA C4-type zinc-finger fold.

This is an uncharacterized protein from Aquifex aeolicus (strain VF5).